The primary structure comprises 352 residues: UDP-N-acetylglucosamine--N-acetylmuramyl-(pentapeptide) pyrophosphoryl-undecaprenol N-acetylglucosamine transferase 2 (352 aa).

UDP-N-acetyl-alpha-D-glucosamine-binding positions include 11-13 (SAG), arginine 164, serine 194, and glutamine 289.

This sequence belongs to the glycosyltransferase 28 family. MurG subfamily.

The protein resides in the cell membrane. It catalyses the reaction di-trans,octa-cis-undecaprenyl diphospho-N-acetyl-alpha-D-muramoyl-L-alanyl-D-glutamyl-meso-2,6-diaminopimeloyl-D-alanyl-D-alanine + UDP-N-acetyl-alpha-D-glucosamine = di-trans,octa-cis-undecaprenyl diphospho-[N-acetyl-alpha-D-glucosaminyl-(1-&gt;4)]-N-acetyl-alpha-D-muramoyl-L-alanyl-D-glutamyl-meso-2,6-diaminopimeloyl-D-alanyl-D-alanine + UDP + H(+). It participates in cell wall biogenesis; peptidoglycan biosynthesis. In terms of biological role, cell wall formation. Catalyzes the transfer of a GlcNAc subunit on undecaprenyl-pyrophosphoryl-MurNAc-pentapeptide (lipid intermediate I) to form undecaprenyl-pyrophosphoryl-MurNAc-(pentapeptide)GlcNAc (lipid intermediate II). The sequence is that of UDP-N-acetylglucosamine--N-acetylmuramyl-(pentapeptide) pyrophosphoryl-undecaprenol N-acetylglucosamine transferase 2 from Bacillus anthracis.